A 300-amino-acid polypeptide reads, in one-letter code: NAD kinase (300 aa).

The Proton acceptor role is filled by Asp75. NAD(+)-binding positions include 75–76 (DG), 149–150 (ND), Arg177, Asp179, 190–195 (TAYALS), Ala214, and Gln248.

It belongs to the NAD kinase family. Requires a divalent metal cation as cofactor.

The protein resides in the cytoplasm. It carries out the reaction NAD(+) + ATP = ADP + NADP(+) + H(+). Functionally, involved in the regulation of the intracellular balance of NAD and NADP, and is a key enzyme in the biosynthesis of NADP. Catalyzes specifically the phosphorylation on 2'-hydroxyl of the adenosine moiety of NAD to yield NADP. This Burkholderia cenocepacia (strain ATCC BAA-245 / DSM 16553 / LMG 16656 / NCTC 13227 / J2315 / CF5610) (Burkholderia cepacia (strain J2315)) protein is NAD kinase.